A 473-amino-acid chain; its full sequence is ATP synthase subunit beta (473 aa).

158–165 (GGAGVGKT) is a binding site for ATP.

The protein belongs to the ATPase alpha/beta chains family. As to quaternary structure, F-type ATPases have 2 components, CF(1) - the catalytic core - and CF(0) - the membrane proton channel. CF(1) has five subunits: alpha(3), beta(3), gamma(1), delta(1), epsilon(1). CF(0) has three main subunits: a(1), b(2) and c(9-12). The alpha and beta chains form an alternating ring which encloses part of the gamma chain. CF(1) is attached to CF(0) by a central stalk formed by the gamma and epsilon chains, while a peripheral stalk is formed by the delta and b chains.

Its subcellular location is the cell membrane. The enzyme catalyses ATP + H2O + 4 H(+)(in) = ADP + phosphate + 5 H(+)(out). Functionally, produces ATP from ADP in the presence of a proton gradient across the membrane. The catalytic sites are hosted primarily by the beta subunits. The protein is ATP synthase subunit beta of Bacillus sp. (strain PS3).